Reading from the N-terminus, the 581-residue chain is Proline--tRNA ligase (581 aa).

Belongs to the class-II aminoacyl-tRNA synthetase family. ProS type 1 subfamily. Homodimer.

The protein resides in the cytoplasm. It carries out the reaction tRNA(Pro) + L-proline + ATP = L-prolyl-tRNA(Pro) + AMP + diphosphate. In terms of biological role, catalyzes the attachment of proline to tRNA(Pro) in a two-step reaction: proline is first activated by ATP to form Pro-AMP and then transferred to the acceptor end of tRNA(Pro). As ProRS can inadvertently accommodate and process non-cognate amino acids such as alanine and cysteine, to avoid such errors it has two additional distinct editing activities against alanine. One activity is designated as 'pretransfer' editing and involves the tRNA(Pro)-independent hydrolysis of activated Ala-AMP. The other activity is designated 'posttransfer' editing and involves deacylation of mischarged Ala-tRNA(Pro). The misacylated Cys-tRNA(Pro) is not edited by ProRS. This chain is Proline--tRNA ligase, found in Chlamydia trachomatis serovar D (strain ATCC VR-885 / DSM 19411 / UW-3/Cx).